The sequence spans 2506 residues: Highly reducing polyketide synthase rstn3 (2506 aa).

The Ketosynthase family 3 (KS3) domain occupies 8–436 (VEPIAIVGMA…GANAHAILDA (429 aa)). Catalysis depends on for beta-ketoacyl synthase activity residues C183, H318, and H358. Positions 547–875 (FIFTGQGAQW…KMVGSLFLSG (329 aa)) constitute a Malonyl-CoA:ACP transacylase (MAT) domain. The N-terminal hotdog fold stretch occupies residues 941 to 1050 (HDLLGSRLPG…ASDQSISSVE (110 aa)). Residues 941-1212 (HDLLGSRLPG…FSSLETAVGE (272 aa)) form the PKS/mFAS DH domain. H973 (proton acceptor; for dehydratase activity) is an active-site residue. Residues 1060 to 1212 (NKDSYDRRWY…FSSLETAVGE (153 aa)) are C-terminal hotdog fold. D1125 functions as the Proton donor; for dehydratase activity in the catalytic mechanism. Positions 1263–1563 (VTRLAIRSSA…SGADIVLDDY (301 aa)) are methyltransferase (CMet) domain. The region spanning 1827–2093 (GRVDSFYFKE…QDDYVGRVVL (267 aa)) is the Enoyl reductase (ER) domain. In terms of domain architecture, Ketoreductase (KR) spans 2116-2296 (ASYLLIGCLG…QATSIALGMI (181 aa)). The Carrier domain maps to 2423 to 2501 (AVKVTTLGLI…DLAEKVVALA (79 aa)). O-(pantetheine 4'-phosphoryl)serine is present on S2460.

Requires pantetheine 4'-phosphate as cofactor.

It participates in antifungal biosynthesis. In terms of biological role, highly reducing polyketide synthase; part of the gene cluster that mediates the biosynthesis of the tetrahydropyranyl antifungal agent restricticin that acts as an inhibitor of CYP51 and blocks the ergosterol biosynthesis. The highly reducing polyketide synthase rstn3, the short chain dehydrogenase rstn4, the cyclase rstn5, the FAD-dependent monooxygenase rstn6 and the enoylreductase rstn7 are required to generate the first stable intermediate desmethylrestrictinol. Rstn3 with rstn7 biosynthesize the first polyketide chain intermediate that is reduced by rstn4, followed by epoxidation by rstn6 before 6-endo cyclization via epoxide opening by rstn5 leads to desmethylrestrictinol. The methyltransferase rstn1 then catalyzes the C4 O-methylation of desmethylrestrictinol to produce restrictinol, and the nonribosomal peptide synthetase rstn8 catalyzes the C3 esterification of restrictinol with glycine that leads to restricticin. The chain is Highly reducing polyketide synthase rstn3 from Aspergillus nomiae NRRL (strain ATCC 15546 / NRRL 13137 / CBS 260.88 / M93).